The chain runs to 166 residues: SsrA-binding protein (166 aa).

It belongs to the SmpB family.

It is found in the cytoplasm. In terms of biological role, required for rescue of stalled ribosomes mediated by trans-translation. Binds to transfer-messenger RNA (tmRNA), required for stable association of tmRNA with ribosomes. tmRNA and SmpB together mimic tRNA shape, replacing the anticodon stem-loop with SmpB. tmRNA is encoded by the ssrA gene; the 2 termini fold to resemble tRNA(Ala) and it encodes a 'tag peptide', a short internal open reading frame. During trans-translation Ala-aminoacylated tmRNA acts like a tRNA, entering the A-site of stalled ribosomes, displacing the stalled mRNA. The ribosome then switches to translate the ORF on the tmRNA; the nascent peptide is terminated with the 'tag peptide' encoded by the tmRNA and targeted for degradation. The ribosome is freed to recommence translation, which seems to be the essential function of trans-translation. The sequence is that of SsrA-binding protein from Parasynechococcus marenigrum (strain WH8102).